A 360-amino-acid polypeptide reads, in one-letter code: Ribosomal RNA large subunit methyltransferase M (360 aa).

Residues Ser-187, 220-223 (CPGG), Asp-239, Asp-259, and Asp-276 contribute to the S-adenosyl-L-methionine site. The Proton acceptor role is filled by Lys-305.

This sequence belongs to the class I-like SAM-binding methyltransferase superfamily. RNA methyltransferase RlmE family. RlmM subfamily. As to quaternary structure, monomer.

The protein localises to the cytoplasm. It carries out the reaction cytidine(2498) in 23S rRNA + S-adenosyl-L-methionine = 2'-O-methylcytidine(2498) in 23S rRNA + S-adenosyl-L-homocysteine + H(+). Its function is as follows. Catalyzes the 2'-O-methylation at nucleotide C2498 in 23S rRNA. The sequence is that of Ribosomal RNA large subunit methyltransferase M from Shewanella halifaxensis (strain HAW-EB4).